Consider the following 175-residue polypeptide: Ribosome maturation factor RimM (175 aa).

Positions 98–175 (EGEYYWHQLE…EMRVDWDADF (78 aa)) constitute a PRC barrel domain.

This sequence belongs to the RimM family. In terms of assembly, binds ribosomal protein uS19.

It is found in the cytoplasm. Its function is as follows. An accessory protein needed during the final step in the assembly of 30S ribosomal subunit, possibly for assembly of the head region. Essential for efficient processing of 16S rRNA. May be needed both before and after RbfA during the maturation of 16S rRNA. It has affinity for free ribosomal 30S subunits but not for 70S ribosomes. The polypeptide is Ribosome maturation factor RimM (Pseudomonas aeruginosa (strain UCBPP-PA14)).